The following is a 515-amino-acid chain: 1-pyrroline-5-carboxylate dehydrogenase (515 aa).

Catalysis depends on residues Glu-286 and Cys-320.

It belongs to the aldehyde dehydrogenase family. RocA subfamily.

The enzyme catalyses L-glutamate 5-semialdehyde + NAD(+) + H2O = L-glutamate + NADH + 2 H(+). It functions in the pathway amino-acid degradation; L-proline degradation into L-glutamate; L-glutamate from L-proline: step 2/2. This is 1-pyrroline-5-carboxylate dehydrogenase from Bacillus cereus (strain B4264).